Here is a 223-residue protein sequence, read N- to C-terminus: ATP-dependent dethiobiotin synthetase BioD (223 aa).

T16 lines the Mg(2+) pocket. Residue K37 is part of the active site. S41 serves as a coordination point for substrate. Mg(2+) is bound by residues D50 and E111. ATP is bound by residues D50, 111 to 114 (EGAG), and 171 to 172 (NR).

Belongs to the dethiobiotin synthetase family. As to quaternary structure, homodimer. Mg(2+) is required as a cofactor.

The protein localises to the cytoplasm. The enzyme catalyses (7R,8S)-7,8-diammoniononanoate + CO2 + ATP = (4R,5S)-dethiobiotin + ADP + phosphate + 3 H(+). It participates in cofactor biosynthesis; biotin biosynthesis; biotin from 7,8-diaminononanoate: step 1/2. Catalyzes a mechanistically unusual reaction, the ATP-dependent insertion of CO2 between the N7 and N8 nitrogen atoms of 7,8-diaminopelargonic acid (DAPA, also called 7,8-diammoniononanoate) to form a ureido ring. In Anaeromyxobacter dehalogenans (strain 2CP-C), this protein is ATP-dependent dethiobiotin synthetase BioD.